We begin with the raw amino-acid sequence, 200 residues long: Recombination protein RecR (200 aa).

The C4-type zinc-finger motif lies at 60-75 (CVYCQALTEDDVCNIC). In terms of domain architecture, Toprim spans 83–177 (TKLCIIESML…KISRIGFGVP (95 aa)).

The protein belongs to the RecR family.

Its function is as follows. May play a role in DNA repair. It seems to be involved in an RecBC-independent recombinational process of DNA repair. It may act with RecF and RecO. The protein is Recombination protein RecR of Francisella tularensis subsp. mediasiatica (strain FSC147).